Reading from the N-terminus, the 273-residue chain is Ribosomal RNA small subunit methyltransferase A (273 aa).

Asn-18, Leu-20, Gly-45, Glu-66, Asp-91, and Asn-113 together coordinate S-adenosyl-L-methionine.

The protein belongs to the class I-like SAM-binding methyltransferase superfamily. rRNA adenine N(6)-methyltransferase family. RsmA subfamily.

It localises to the cytoplasm. The catalysed reaction is adenosine(1518)/adenosine(1519) in 16S rRNA + 4 S-adenosyl-L-methionine = N(6)-dimethyladenosine(1518)/N(6)-dimethyladenosine(1519) in 16S rRNA + 4 S-adenosyl-L-homocysteine + 4 H(+). Specifically dimethylates two adjacent adenosines (A1518 and A1519) in the loop of a conserved hairpin near the 3'-end of 16S rRNA in the 30S particle. May play a critical role in biogenesis of 30S subunits. The chain is Ribosomal RNA small subunit methyltransferase A from Salmonella typhimurium (strain LT2 / SGSC1412 / ATCC 700720).